Consider the following 153-residue polypeptide: Iron-sulfur cluster assembly scaffold protein IscU 1 (153 aa).

Cys-33, Cys-58, His-101, and Cys-102 together coordinate [2Fe-2S] cluster.

Belongs to the NifU family. As to quaternary structure, forms a heterotetramer with IscS2.

In terms of biological role, a scaffold on which IscS assembles Fe-S clusters. Subsequently gives the nascent cluster to other proteins. It is likely that Fe-S cluster coordination is flexible as the role of this complex is to build and then hand off Fe-S clusters. In Archaeoglobus fulgidus (strain ATCC 49558 / DSM 4304 / JCM 9628 / NBRC 100126 / VC-16), this protein is Iron-sulfur cluster assembly scaffold protein IscU 1 (iscU1).